A 195-amino-acid chain; its full sequence is Cytochrome b-245 light chain (195 aa).

Over 2-7 (GQIEWA) the chain is Cytoplasmic. The helical transmembrane segment at 8–30 (MWANEQALASGLILITGGIVATA) threads the bilayer. The Extracellular portion of the chain corresponds to 31 to 35 (GRFTQ). The chain crosses the membrane as a helical span at residues 36-53 (WYFGAYSIVAGVFVCLLE). The Cytoplasmic portion of the chain corresponds to 54–69 (YPRGKRKKGSTMERWG). The stretch at 70-80 (QKYMTAVVKLF) is an intramembrane region. The Cytoplasmic segment spans residues 81–86 (GPFTRN). A helical transmembrane segment spans residues 87 to 104 (YYVRAVLHLLLSVPAGFL). Leucine 105 is a topological domain (extracellular). The chain crosses the membrane as a helical span at residues 106–126 (ATILGTACLAIASGIYLLAAV). Over 127–195 (RGEQWTPIEP…NPIPVTDEVV (69 aa)) the chain is Cytoplasmic. The segment at 134 to 195 (IEPKPRERPQ…NPIPVTDEVV (62 aa)) is disordered. Position 147 is a phosphothreonine (threonine 147). Lysine 149 is covalently cross-linked (Glycyl lysine isopeptide (Lys-Gly) (interchain with G-Cter in ubiquitin)). At serine 168 the chain carries Phosphoserine.

It belongs to the p22phox family. As to quaternary structure, component of the phagocyte NADPH oxidase core complex/cytochrome b558 complex, composed of CYBB (heavy chain (beta)) and CYBA (light chain (alpha)). Component of the phagocyte NADPH oxidase complex composed of an obligatory core heterodimer formed by the membrane proteins CYBA and CYBB and the cytosolic regulatory subunits NCF1/p47-phox, NCF2/p67-phox, NCF4/p40-phox and the small GTPase RAC1 or RAC2. Interacts with NCF1 (via SH3 domain). Interacts with SH3PXD2A. Interacts with DUOX1, DUOX2 and TPO. Interacts with NOX4; this interaction mediates superoxide generation. Interacts with calprotectin (S100A8/9). Interacts with GBP7. Interacts with NOXO1. Forms a heterodimer with NOX3 and is essential for activity and cell membrane localization of NOX3. Interacts with NOX1. Phosphorylation at Thr-147 enhances NADPH oxidase activity by promoting NCF1/p47-phox binding. In terms of processing, ubiquitinated at Lys-149 likely by RNF145.

It is found in the cell membrane. Subunit of NADPH oxidase complexes that is required for the NADPH oxidase activity that generates, in various cell types, superoxide from molecular oxygen utilizing NADPH as an electron donor. Subunit of the phagocyte NADPH oxidase complex that mediates the transfer of electrons from cytosolic NADPH to O2 to produce the superoxide anion (O2(-)). In the activated complex, electrons are first transferred from NADPH to flavin adenine dinucleotide (FAD) and subsequently transferred via two heme molecules to molecular oxygen, producing superoxide through an outer-sphere reaction. Activation of the NADPH oxidase complex is initiated by the assembly of cytosolic subunits of the NADPH oxidase complex with the core NADPH oxidase complex to form a complex at the plasma membrane or phagosomal membrane. This activation process is initiated by phosphorylation dependent binding of the cytosolic NCF1/p47-phox subunit to the C-terminus of CYBA/p22-phox. Aassociates with NOX3 to form a functional NADPH oxidase constitutively generating superoxide. The protein is Cytochrome b-245 light chain of Homo sapiens (Human).